The sequence spans 73 residues: Probable minor pilin MMP0528 (73 aa).

A propeptide spanning residues 1–10 (MLKKLYSKKG) is cleaved from the precursor. The QXSXEXXXL motif lies at 11-19 (QVSMEMGIL).

In terms of processing, the N-terminus is probably cleaved by the prepilin peptidase EppA, which recognizes the class III signal sequence.

The protein localises to the secreted. Its subcellular location is the cell surface. The protein resides in the fimbrium. This Methanococcus maripaludis (strain DSM 14266 / JCM 13030 / NBRC 101832 / S2 / LL) protein is Probable minor pilin MMP0528.